The primary structure comprises 549 residues: Lipase 4 (549 aa).

The N-terminal stretch at 1-15 (MKLALVLSLIVSVAA) is a signal peptide. C75 and C112 form a disulfide bridge. The Acyl-ester intermediate role is filled by S224. C283 and C292 form a disulfide bridge. Residue E356 is the Charge relay system of the active site. N366 carries an N-linked (GlcNAc...) asparagine glycan. Residue H464 is the Charge relay system of the active site.

The protein belongs to the type-B carboxylesterase/lipase family.

It catalyses the reaction a triacylglycerol + H2O = a diacylglycerol + a fatty acid + H(+). In Diutina rugosa (Yeast), this protein is Lipase 4 (LIP4).